The sequence spans 946 residues: DNA primase (946 aa).

Positions 596-626 are disordered; sequence RDTEEDEDGKEDKNNVPDNGVFQKTTSSVDT. The span at 617-626 shows a compositional bias: polar residues; that stretch reads FQKTTSSVDT. Residues 881 to 920 form a CHC2-type zinc finger; sequence CLNYTHRNPQETVQVFIDLRTEHSYALWASLWSRCFTKKC.

Belongs to the herpesviridae DNA primase family. As to quaternary structure, associates with the helicase and the primase-associated factor to form the helicase-primase factor.

The protein resides in the host nucleus. Essential component of the helicase/primase complex. Unwinds the DNA at the replication forks and generates single-stranded DNA for both leading and lagging strand synthesis. The primase initiates primer synthesis and thereby produces large amount of short RNA primers on the lagging strand that the polymerase elongates using dNTPs. This chain is DNA primase (UL70), found in Human cytomegalovirus (strain AD169) (HHV-5).